The sequence spans 367 residues: rRNA processing protein RCL1 (367 aa).

Position 2 is an N-acetylserine (S2).

It belongs to the RNA 3'-terminal cyclase family. Type 2 subfamily. In terms of assembly, interacts directly with BMS1 and the U3 snoRNA to form a stable subcomplex. Component of the 90S small subunit processome also known as 90S pre-ribosome that consists of the 35S pre-rRNA, early-associating ribosomal proteins most of which are part of the small ribosomal subunit, the U3 snoRNA and associated proteins.

The protein resides in the nucleus. It is found in the nucleolus. Does not have cyclase activity. Plays a role in 40S-ribosomal-subunit biogenesis in the early pre-rRNA processing steps at sites A0, A1 and A2 that are required for proper maturation of the 18S RNA. RCL1 activates BMS1 by promoting GDP/GTP exchange. The chain is rRNA processing protein RCL1 (RCL1) from Saccharomyces cerevisiae (strain ATCC 204508 / S288c) (Baker's yeast).